A 251-amino-acid chain; its full sequence is Capsid protein (251 aa).

A disordered region spans residues 1–35; that stretch reads MPKRDAPWRHMAGTSKVSRSGNYSPSGGMGSKSNK. The Bipartite nuclear localization signal motif lies at 3-20; it reads KRDAPWRHMAGTSKVSRS. Positions 15-35 are enriched in polar residues; it reads SKVSRSGNYSPSGGMGSKSNK. The Nuclear localization signal motif lies at 35–49; sequence KANAWVNRPMYRKPR. A zinc finger spans residues 54–71; the sequence is YKSPDVPKGCEGPCKVQS. The short motif at 96 to 117 is the Nuclear export signal element; the sequence is ITHRVGKRFCVKSVYILGKIWM. The short motif at 195–242 is the Bipartite nuclear localization signal element; the sequence is RRFWKVNNHVVYNHQEAGKYENHTENALLLYMACTHASNPVYATLKIR.

Belongs to the geminiviridae capsid protein family. As to quaternary structure, homomultimer. Binds to single-stranded and double-stranded viral DNA. Interacts (via nuclear localization signals) with host importin alpha-1a.

The protein localises to the virion. It localises to the host nucleus. Its function is as follows. Encapsidates the viral DNA into characteristic twinned ('geminate') particles. Binds the genomic viral ssDNA and shuttles it into and out of the cell nucleus. The CP of bipartite geminiviruses is not required for cell-to-cell or systemic movement. This chain is Capsid protein, found in Macroptilium lathyroides (Lima bean).